Consider the following 395-residue polypeptide: Na(+)/H(+) antiporter NhaA (395 aa).

Transmembrane regions (helical) follow at residues 18–38 (AGGILLLVFSVGAVIFANSPL), 64–84 (LLMWVNDGFMAIFFVLVGLEV), 100–120 (IFPAIAACGGMIVPALVYWLV), 129–149 (GGWAIPMATDIAFAIGVLVLL), 160–180 (FLLALAIIDDLGAIIVIALFF), 182–202 (HDLSTKALILASIAIVGLILL), 205–225 (FKVSNLIAYVVVGIILWVSVL), 226–246 (KSGVHATLAGVIIGFCVPLKG), 266–286 (FLILPLFAFCNAGIPLSGLGM), 295–315 (LGVTLGLLLGKPIGVFLFSYL), 333–353 (IFAVSVLCGIGFTMSMFLASL), and 368–388 (LGILFGSSVSAVVGYWLLFVT).

This sequence belongs to the NhaA Na(+)/H(+) (TC 2.A.33) antiporter family.

It is found in the cell inner membrane. The catalysed reaction is Na(+)(in) + 2 H(+)(out) = Na(+)(out) + 2 H(+)(in). Na(+)/H(+) antiporter that extrudes sodium in exchange for external protons. This chain is Na(+)/H(+) antiporter NhaA, found in Histophilus somni (strain 129Pt) (Haemophilus somnus).